Consider the following 580-residue polypeptide: MSKLKTLNRQFISNLETHKVTTDAKRNLILSILKSTTTKREAKNYLTKYQNQFDFNDDLDFNKNIKIKNEQLSLTNRDSQRELFINRFLNQSNPFINIYDREDVKLQKVPLRLAIFKIKFTKITIKQWKGIAETFKRLITLGISPIIMLDYDHLPSNSFKNNELYMINQGNKMLNYLGRPEEESDLKVTLLRSLFTSHKGVPTLDSLESILIPLYQGIIPIIQPIVYNADASKQEFLESDKLLLGLSSALIEKRTTDLLSIEKIVMIDPMGGIPSIERRQTSHVFINLSQEYSDILSELFIGHIEPKYRDTHVNNLNTMNNVLSFINEKSGNDETTGIITTPEIMSINIDQLNPIIYNVLTDRAIISSSLPSTTNRTPHLSTTIIKKGVDVQIFDIDNYDKDLTMQNLFDDKLVNKEKLINLLNDSFGKSLDVDPYLDRINDNIATVVIVGDYDGAAIITWEYSKGEKIAYLDKFAIAKKNQGLPGLADVIFKIILQSHPFELIWRSRKNNPVNKWYFERCCGCMSAPDSQWKIFYTGEVFDKKIDRFKRNPRHKNGVVNIDRKLQQYSEICEGITPSFK.

In terms of domain architecture, N-acetyltransferase spans 403–560; the sequence is LTMQNLFDDK…NPRHKNGVVN (158 aa).

The protein belongs to the acetyltransferase family.

The protein localises to the mitochondrion. The catalysed reaction is L-glutamate + acetyl-CoA = N-acetyl-L-glutamate + CoA + H(+). It functions in the pathway amino-acid biosynthesis; L-arginine biosynthesis; N(2)-acetyl-L-ornithine from L-glutamate: step 1/4. Its function is as follows. N-acetylglutamate synthase involved in arginine biosynthesis. In Candida dubliniensis (strain CD36 / ATCC MYA-646 / CBS 7987 / NCPF 3949 / NRRL Y-17841) (Yeast), this protein is Amino-acid acetyltransferase, mitochondrial (ARG2).